Reading from the N-terminus, the 296-residue chain is Cytidine deaminase (296 aa).

CMP/dCMP-type deaminase domains lie at 52 to 172 and 191 to 296; these read TAVE…FGPK and THAD…YFAL. Residue 93 to 95 coordinates substrate; it reads NQE. His-106 contributes to the Zn(2+) binding site. The active-site Proton donor is Glu-108. Residues Cys-133 and Cys-136 each contribute to the Zn(2+) site.

It belongs to the cytidine and deoxycytidylate deaminase family. In terms of assembly, homodimer. Requires Zn(2+) as cofactor.

The catalysed reaction is cytidine + H2O + H(+) = uridine + NH4(+). The enzyme catalyses 2'-deoxycytidine + H2O + H(+) = 2'-deoxyuridine + NH4(+). Its function is as follows. This enzyme scavenges exogenous and endogenous cytidine and 2'-deoxycytidine for UMP synthesis. The polypeptide is Cytidine deaminase (Actinobacillus succinogenes (strain ATCC 55618 / DSM 22257 / CCUG 43843 / 130Z)).